Here is a 472-residue protein sequence, read N- to C-terminus: Glutamate--tRNA ligase (472 aa).

Positions 8–18 (PSPTGFLHIGS) match the 'HIGH' region motif. A 'KMSKS' region motif is present at residues 239 to 243 (KLSKR). Lys-242 contributes to the ATP binding site.

This sequence belongs to the class-I aminoacyl-tRNA synthetase family. Glutamate--tRNA ligase type 1 subfamily. Monomer.

The protein localises to the cytoplasm. It catalyses the reaction tRNA(Glu) + L-glutamate + ATP = L-glutamyl-tRNA(Glu) + AMP + diphosphate. Functionally, catalyzes the attachment of glutamate to tRNA(Glu) in a two-step reaction: glutamate is first activated by ATP to form Glu-AMP and then transferred to the acceptor end of tRNA(Glu). This chain is Glutamate--tRNA ligase, found in Solibacter usitatus (strain Ellin6076).